We begin with the raw amino-acid sequence, 193 residues long: 3-isopropylmalate dehydratase small subunit (193 aa).

This sequence belongs to the LeuD family. LeuD type 1 subfamily. In terms of assembly, heterodimer of LeuC and LeuD.

The enzyme catalyses (2R,3S)-3-isopropylmalate = (2S)-2-isopropylmalate. The protein operates within amino-acid biosynthesis; L-leucine biosynthesis; L-leucine from 3-methyl-2-oxobutanoate: step 2/4. In terms of biological role, catalyzes the isomerization between 2-isopropylmalate and 3-isopropylmalate, via the formation of 2-isopropylmaleate. The polypeptide is 3-isopropylmalate dehydratase small subunit (Bacillus anthracis (strain CDC 684 / NRRL 3495)).